A 47-amino-acid chain; its full sequence is Large ribosomal subunit protein bL34 (47 aa).

The protein belongs to the bacterial ribosomal protein bL34 family.

The chain is Large ribosomal subunit protein bL34 from Nocardia farcinica (strain IFM 10152).